We begin with the raw amino-acid sequence, 264 residues long: MKAVVLTVAVFFLTGSQARHFWQQDEPQSSWDRMKDFATVYLDAVKDSGRDYVTQFETSALGKQLNLKLLDNWDSLSSTVSKLREQIGPVTQEFWDKLEKDTVSLRQEMNKDLEEVKLKVQPYLDEFQKRWQEDVERYRQQVEPLGTELREGARQKLQELHEKLSPLGQELRDRARAHVDALRTHLAPYSDELRQRLAARLEALKESSSLADYQAKATEHLSALGEKAKPALEDLRQGLLPVLENLKMSFWSAVDEATKKLTTQ.

A signal peptide spans 1-18 (MKAVVLTVAVFFLTGSQA). 2 consecutive repeat copies span residues 67-88 (LKLL…EQIG) and 89-110 (PVTQ…QEMN). The tract at residues 67–264 (LKLLDNWDSL…DEATKKLTTQ (198 aa)) is 10 X approximate tandem repeats. Met-109 carries the post-translational modification Methionine sulfoxide. Residues 111 to 121 (KDLEEVKLKVQ) form a 3; half-length repeat. 3 tandem repeats follow at residues 122–143 (PYLD…QQVE), 144–165 (PLGT…EKLS), and 166–187 (PLGQ…THLA). The stretch at 188 to 207 (PYSDELRQRLAARLEALKES) is one 7; truncated repeat. Copy 8 of the repeat occupies 208 to 229 (SSLADYQAKATEHLSALGEKAK). The stretch at 230–240 (PALEDLRQGLL) is one 9; half-length repeat. Residues 241–264 (PVLENLKMSFWSAVDEATKKLTTQ) form repeat 10.

It belongs to the apolipoprotein A1/A4/E family. As to quaternary structure, homodimer. Interacts with APOA1BP and CLU. Component of a sperm activating protein complex (SPAP), consisting of APOA1, an immunoglobulin heavy chain, an immunoglobulin light chain and albumin. Interacts with NDRG1. Interacts with SCGB3A2. Interacts with NAXE and YJEFN3. In terms of processing, glycosylated. Post-translationally, palmitoylated. Phosphorylation sites are present in the extracellular medium.

Its subcellular location is the secreted. Participates in the reverse transport of cholesterol from tissues to the liver for excretion by promoting cholesterol efflux from tissues and by acting as a cofactor for the lecithin cholesterol acyltransferase (LCAT). As part of the SPAP complex, activates spermatozoa motility. The protein is Apolipoprotein A-I (ApoA1) of Marmota monax (Woodchuck).